The following is a 344-amino-acid chain: Dihydroorotase (344 aa).

2 residues coordinate Zn(2+): His-14 and His-16. Residues 16 to 18 and Asn-42 each bind substrate; that span reads HFR. Zn(2+) is bound by residues Lys-100, His-137, and His-175. An N6-carboxylysine modification is found at Lys-100. Position 137 (His-137) interacts with substrate. Leu-220 contacts substrate. Residue Asp-248 participates in Zn(2+) binding. Residue Asp-248 is part of the active site. Residues His-252 and Ala-264 each contribute to the substrate site.

This sequence belongs to the metallo-dependent hydrolases superfamily. DHOase family. Class II DHOase subfamily. As to quaternary structure, homodimer. Zn(2+) serves as cofactor.

It carries out the reaction (S)-dihydroorotate + H2O = N-carbamoyl-L-aspartate + H(+). It functions in the pathway pyrimidine metabolism; UMP biosynthesis via de novo pathway; (S)-dihydroorotate from bicarbonate: step 3/3. Functionally, catalyzes the reversible cyclization of carbamoyl aspartate to dihydroorotate. The sequence is that of Dihydroorotase from Alcanivorax borkumensis (strain ATCC 700651 / DSM 11573 / NCIMB 13689 / SK2).